The following is a 67-amino-acid chain: Large ribosomal subunit protein uL29 (67 aa).

It belongs to the universal ribosomal protein uL29 family.

The chain is Large ribosomal subunit protein uL29 from Sulfurihydrogenibium sp. (strain YO3AOP1).